The chain runs to 289 residues: Elongation factor Ts (289 aa).

Positions 82–85 are involved in Mg(2+) ion dislocation from EF-Tu; that stretch reads TDFL.

The protein belongs to the EF-Ts family.

It is found in the cytoplasm. Associates with the EF-Tu.GDP complex and induces the exchange of GDP to GTP. It remains bound to the aminoacyl-tRNA.EF-Tu.GTP complex up to the GTP hydrolysis stage on the ribosome. The chain is Elongation factor Ts from Azotobacter vinelandii (strain DJ / ATCC BAA-1303).